Here is a 299-residue protein sequence, read N- to C-terminus: Protein sprouty homolog 4 (299 aa).

Met1 bears the N-acetylmethionine mark. 2 disordered regions span residues Asn55–Ala79 and Phe92–Pro126. The span at Phe92 to Ser107 shows a compositional bias: low complexity. Ser125 carries the phosphoserine modification. Positions Lys166–Cys273 constitute an SPR domain. Residues Val181–Phe299 form a required for interaction with TESK1. Required for colocalization with TESK1 at vesicular spots in the cytoplasm and inhibition of TESK1 kinase activity, resulting in inhibition of cell spreading region.

It belongs to the sprouty family. As to quaternary structure, interacts (via C-terminus) with TESK1 (via both C- and N-termini); the interaction inhibits TESK1 kinase activity. Interacts with RAF1. Interacts with CAV1 (via C-terminus).

Its subcellular location is the cytoplasm. It is found in the cell projection. The protein localises to the ruffle membrane. In terms of biological role, suppresses the insulin receptor and EGFR-transduced MAPK signaling pathway, but does not inhibit MAPK activation by a constitutively active mutant Ras. Probably impairs the formation of GTP-Ras. Inhibits Ras-independent, but not Ras-dependent, activation of RAF1. Represses integrin-mediated cell spreading via inhibition of TESK1-mediated phosphorylation of cofilin. The sequence is that of Protein sprouty homolog 4 (SPRY4) from Homo sapiens (Human).